Reading from the N-terminus, the 368-residue chain is Homoserine O-acetyltransferase (368 aa).

Residues 41–352 enclose the AB hydrolase-1 domain; that stretch reads NVILITHALS…DYGHDSFLVE (312 aa). Ser147 (nucleophile) is an active-site residue. Substrate is bound at residue Arg219. Catalysis depends on residues Asp313 and His346. Asp347 contributes to the substrate binding site.

Belongs to the AB hydrolase superfamily. MetX family. As to quaternary structure, homodimer.

Its subcellular location is the cytoplasm. It catalyses the reaction L-homoserine + acetyl-CoA = O-acetyl-L-homoserine + CoA. The protein operates within amino-acid biosynthesis; L-methionine biosynthesis via de novo pathway; O-acetyl-L-homoserine from L-homoserine: step 1/1. Functionally, transfers an acetyl group from acetyl-CoA to L-homoserine, forming acetyl-L-homoserine. This chain is Homoserine O-acetyltransferase, found in Nautilia profundicola (strain ATCC BAA-1463 / DSM 18972 / AmH).